A 98-amino-acid chain; its full sequence is NADH-ubiquinone oxidoreductase chain 4L (98 aa).

The next 3 membrane-spanning stretches (helical) occupy residues 2 to 22 (SLVY…LLMF), 29 to 49 (SLLC…ILIL), and 61 to 81 (IIML…LVMV).

It belongs to the complex I subunit 4L family. As to quaternary structure, core subunit of respiratory chain NADH dehydrogenase (Complex I) which is composed of 45 different subunits.

It localises to the mitochondrion inner membrane. The catalysed reaction is a ubiquinone + NADH + 5 H(+)(in) = a ubiquinol + NAD(+) + 4 H(+)(out). Its function is as follows. Core subunit of the mitochondrial membrane respiratory chain NADH dehydrogenase (Complex I) which catalyzes electron transfer from NADH through the respiratory chain, using ubiquinone as an electron acceptor. Part of the enzyme membrane arm which is embedded in the lipid bilayer and involved in proton translocation. The polypeptide is NADH-ubiquinone oxidoreductase chain 4L (MT-ND4L) (Galemys pyrenaicus (Iberian desman)).